The chain runs to 133 residues: Ribosome-binding factor A (133 aa).

This sequence belongs to the RbfA family. Monomer. Binds 30S ribosomal subunits, but not 50S ribosomal subunits or 70S ribosomes.

Its subcellular location is the cytoplasm. In terms of biological role, one of several proteins that assist in the late maturation steps of the functional core of the 30S ribosomal subunit. Associates with free 30S ribosomal subunits (but not with 30S subunits that are part of 70S ribosomes or polysomes). Required for efficient processing of 16S rRNA. May interact with the 5'-terminal helix region of 16S rRNA. The protein is Ribosome-binding factor A of Acinetobacter baylyi (strain ATCC 33305 / BD413 / ADP1).